The primary structure comprises 302 residues: Ribosomal RNA small subunit methyltransferase A (302 aa).

S-adenosyl-L-methionine contacts are provided by N27, L29, G54, E75, D100, and N138.

It belongs to the class I-like SAM-binding methyltransferase superfamily. rRNA adenine N(6)-methyltransferase family. RsmA subfamily.

It localises to the cytoplasm. It carries out the reaction adenosine(1518)/adenosine(1519) in 16S rRNA + 4 S-adenosyl-L-methionine = N(6)-dimethyladenosine(1518)/N(6)-dimethyladenosine(1519) in 16S rRNA + 4 S-adenosyl-L-homocysteine + 4 H(+). Functionally, specifically dimethylates two adjacent adenosines (A1518 and A1519) in the loop of a conserved hairpin near the 3'-end of 16S rRNA in the 30S particle. May play a critical role in biogenesis of 30S subunits. This chain is Ribosomal RNA small subunit methyltransferase A, found in Natranaerobius thermophilus (strain ATCC BAA-1301 / DSM 18059 / JW/NM-WN-LF).